Consider the following 204-residue polypeptide: dITP/XTP pyrophosphatase (204 aa).

Substrate is bound at residue 11–16; it reads SRNRKK. Residue Asp-76 is the Proton acceptor of the active site. A Mg(2+)-binding site is contributed by Asp-76. Residues Ser-77, 158 to 161, Lys-181, and 186 to 187 each bind substrate; these read FGYD and HR.

The protein belongs to the HAM1 NTPase family. As to quaternary structure, homodimer. Mg(2+) serves as cofactor.

It carries out the reaction XTP + H2O = XMP + diphosphate + H(+). The catalysed reaction is dITP + H2O = dIMP + diphosphate + H(+). The enzyme catalyses ITP + H2O = IMP + diphosphate + H(+). In terms of biological role, pyrophosphatase that catalyzes the hydrolysis of nucleoside triphosphates to their monophosphate derivatives, with a high preference for the non-canonical purine nucleotides XTP (xanthosine triphosphate), dITP (deoxyinosine triphosphate) and ITP. Seems to function as a house-cleaning enzyme that removes non-canonical purine nucleotides from the nucleotide pool, thus preventing their incorporation into DNA/RNA and avoiding chromosomal lesions. This is dITP/XTP pyrophosphatase from Mycobacterium tuberculosis (strain CDC 1551 / Oshkosh).